The following is a 1252-amino-acid chain: Calmodulin-regulated spectrin-associated protein 3 (1252 aa).

Disordered regions lie at residues 183 to 205 (KTEQ…SPAQ), 331 to 385 (HAVS…SMSH), 429 to 457 (SVSS…ESGD), 479 to 604 (GAAD…MSEL), 638 to 697 (FLQV…LGDY), 712 to 935 (QRDM…EAAR), 962 to 981 (TTRA…GDFT), 996 to 1030 (DLDK…DDSA), and 1063 to 1114 (PNNL…TGPR). Thr184 is subject to Phosphothreonine. At Ser193 the chain carries Phosphoserine. A Calponin-homology (CH) domain is found at 203-312 (PAQPSIRYRK…LVVLLAEMYM (110 aa)). 6 positions are modified to phosphoserine: Ser334, Ser347, Ser351, Ser368, Ser373, and Ser382. Positions 335–353 (PRNTETVPSQNNSGSSSPV) are enriched in polar residues. A compositionally biased stretch (low complexity) spans 359–373 (PLLSPGGPQSPLRGS). 3 stretches are compositionally biased toward polar residues: residues 374 to 383 (TGSLKSSPSM), 441 to 450 (VSTSSRNSAQ), and 525 to 534 (ENPSKSSPCS). Phosphoserine occurs at positions 548, 555, and 561. Over residues 569-580 (AERKKQLVKAEA) the composition is skewed to basic and acidic residues. A coiled-coil region spans residues 595-629 (EALSSEMSELGARLEEKRRAIEAQKRRIEAIFAKH). Ser683 carries the phosphoserine modification. A coiled-coil region spans residues 696–727 (DYNRAVSKLSAALSSLQRDMQRLTDQQQRLLA). The span at 729–739 (PEAPGPAPPPA) shows a compositional bias: pro residues. The span at 740–768 (AWVIPGPATGPKAASPSPARRAPAARRSP) shows a compositional bias: low complexity. At Ser767 the chain carries Phosphoserine. Position 797 is a phosphothreonine (Thr797). 2 positions are modified to phosphoserine: Ser812 and Ser881. Residues 812-825 (SPSQVPVQTRSSIL) show a composition bias toward polar residues. Positions 887–934 (YKDEDKPEDEMAQKRASLLERQQRRVEEARRRKQWQEAEKEQKREEAA) are enriched in basic and acidic residues. The stretch at 896 to 943 (EMAQKRASLLERQQRRVEEARRRKQWQEAEKEQKREEAARLAQEAPGL) forms a coiled coil. Ser1077 carries the phosphoserine modification. The CKK domain maps to 1112–1246 (GPRLYKEPSA…QSKKPTTPKK (135 aa)).

It belongs to the CAMSAP1 family. As to quaternary structure, interacts with PLEKHA7. Interacts with CAMSAP2. Interacts with KATNA1 and KATNB1; leading to regulate the length of CAMSAP3-decorated microtubule stretches. Interacts with AKAP9; regulating Golgi assembly in epithelial cells. Interacts with MACF1. Interacts with isoform C of CDH23; leading to inhibit CAMSAP3 ability to induce microtubule bundle formation. Interacts with AKNA. In terms of tissue distribution, expressed at the apical surface of respiratory epithelia, as well as in the acini of submucosal glands (at protein level). In cochlea, restricted to the organ of Corti and increases during development (at protein level). Highly expressed in both sensory hair cells and supporting cells.

The protein resides in the cytoplasm. It localises to the cytoskeleton. Its subcellular location is the cell junction. The protein localises to the adherens junction. It is found in the cilium axoneme. The protein resides in the cilium basal body. In terms of biological role, key microtubule-organizing protein that specifically binds the minus-end of non-centrosomal microtubules and regulates their dynamics and organization. Specifically recognizes growing microtubule minus-ends and autonomously decorates and stabilizes microtubule lattice formed by microtubule minus-end polymerization. Acts on free microtubule minus-ends that are not capped by microtubule-nucleating proteins or other factors and protects microtubule minus-ends from depolymerization. In addition, it also reduces the velocity of microtubule polymerization. Required for the biogenesis and the maintenance of zonula adherens by anchoring the minus-end of microtubules to zonula adherens and by recruiting the kinesin KIFC3 to those junctional sites. Required for orienting the apical-to-basal polarity of microtubules in epithelial cells: acts by tethering non-centrosomal microtubules to the apical cortex, leading to their longitudinal orientation. Plays a key role in early embryos, which lack centrosomes: accumulates at the microtubule bridges that connect pairs of cells and enables the formation of a non-centrosomal microtubule-organizing center that directs intracellular transport in the early embryo. Couples non-centrosomal microtubules with actin: interaction with MACF1 at the minus ends of non-centrosomal microtubules, tethers the microtubules to actin filaments, regulating focal adhesion size and cell migration. Plays a key role in the generation of non-centrosomal microtubules by accumulating in the pericentrosomal region and cooperating with KATNA1 to release non-centrosomal microtubules from the centrosome. Through the microtubule cytoskeleton, also regulates the organization of cellular organelles including the Golgi and the early endosomes. Through interaction with AKAP9, involved in translocation of Golgi vesicles in epithelial cells, where microtubules are mainly non-centrosomal. Plays an important role in motile cilia function by facilitatating proper orientation of basal bodies and formation of central microtubule pairs in motile cilia. The chain is Calmodulin-regulated spectrin-associated protein 3 from Mus musculus (Mouse).